The following is a 292-amino-acid chain: Peroxisomal 2,4-dienoyl-CoA reductase SPS19 [(3E)-enoyl-CoA-producing] (292 aa).

The NADP(+) site is built by I36, D85, and K145. S162 functions as the Proton donor in the catalytic mechanism. NADP(+) is bound at residue K180. The active-site Lowers pKa of active site Tyr is the K180. K188 is covalently cross-linked (Glycyl lysine isopeptide (Lys-Gly) (interchain with G-Cter in ubiquitin)). Position 209 (I209) interacts with NADP(+). The short motif at 290–292 (SKL) is the Microbody targeting signal element.

This sequence belongs to the short-chain dehydrogenases/reductases (SDR) family. Homodimer.

It localises to the peroxisome. It carries out the reaction a (2E,4Z)-dienoyl-CoA + NADPH + H(+) = a 4,5-saturated-(3E)-enoyl-CoA + NADP(+). It catalyses the reaction a (2E,4E)-dienoyl-CoA + NADPH + H(+) = a 4,5-saturated-(3E)-enoyl-CoA + NADP(+). Functionally, auxiliary enzyme of beta-oxidation. Participates in the degradation of unsaturated fatty enoyl-CoA esters having double bonds in both even- and odd-numbered positions in peroxisome. Catalyzes the NADP-dependent reduction of 2,4-dienoyl-CoA to yield trans-3-enoyl-CoA. Dispensable for growth and sporulation on solid acetate and oleate media, but is essential for these processes to occur on petroselineate. This chain is Peroxisomal 2,4-dienoyl-CoA reductase SPS19 [(3E)-enoyl-CoA-producing] (SPS19), found in Saccharomyces cerevisiae (strain ATCC 204508 / S288c) (Baker's yeast).